A 461-amino-acid chain; its full sequence is D-phenylhydantoinase (461 aa).

A divalent metal cation contacts are provided by H59, H61, and K151. An N6-carboxylysine modification is found at K151. Substrate is bound at residue Y156. 2 residues coordinate a divalent metal cation: H182 and H239. S286 provides a ligand contact to substrate. D313 is a binding site for a divalent metal cation. N335 lines the substrate pocket.

This sequence belongs to the metallo-dependent hydrolases superfamily. Hydantoinase/dihydropyrimidinase family. As to quaternary structure, homotetramer. Requires a divalent metal cation as cofactor. Post-translationally, carboxylation allows a single lysine to coordinate two divalent metal cations.

It catalyses the reaction D-5-phenylhydantoin + H2O = N-carbamoyl-D-phenylglycine + H(+). Functionally, catalyzes the stereospecific hydrolysis of the cyclic amide bond of D-hydantoin derivatives with an aromatic side chains at the 5'-position. Has no activity on dihydropyrimidines. The physiological function is unknown. This Escherichia coli O9:H4 (strain HS) protein is D-phenylhydantoinase.